Consider the following 301-residue polypeptide: Glycine--tRNA ligase alpha subunit (301 aa).

The protein belongs to the class-II aminoacyl-tRNA synthetase family. Tetramer of two alpha and two beta subunits.

It localises to the cytoplasm. It catalyses the reaction tRNA(Gly) + glycine + ATP = glycyl-tRNA(Gly) + AMP + diphosphate. This Bordetella avium (strain 197N) protein is Glycine--tRNA ligase alpha subunit.